A 371-amino-acid polypeptide reads, in one-letter code: Barbiturase 2 (371 aa).

The RU A stretch occupies residues 1–104; that stretch reads MTRPIEVRKV…TIFAYAPEGR (104 aa). Substrate is bound by residues Arg-53 and 83–84; that span reads SG. Residues 112-247 are RU B; that stretch reads RVTVGYAMSE…AQIVVVGNAR (136 aa). Lys-162 is an active-site residue. Substrate-binding positions include Asn-194 and 230 to 231; that span reads SS. Residue Ser-230 is the Nucleophile of the active site. Residues 253–371 form an RU C region; the sequence is FRVGHSIMKD…PVIAIVDLEA (119 aa). Glu-303 serves as a coordination point for Mg(2+). Substrate-binding positions include Lys-330 and 349–350; that span reads SV. The Mg(2+) site is built by Ala-352, Gln-355, Gly-356, Pro-357, and Gly-360.

The protein belongs to the cyclic amide hydrolase (CyAH) family. As to quaternary structure, homotetramer.

It carries out the reaction barbiturate + H2O = 3-oxo-3-ureidopropanoate. It participates in pyrimidine metabolism; uracil degradation via oxidative pathway; malonate and urea from uracil: step 2/3. Its function is as follows. Responsible for the hydrolysis of barbituric acid (2,4,6-trihydroxy-1,3-pyrimidine), an intermediate in the oxidative catabolism of pyrimidines. Catalyzes the hydrolytic opening of the pyrimidine ring of barbituric acid to yield ureidomalonic acid. Can also use cyanuric acid as a substrate, albeit with lower efficiency. In Nocardioides sp. (strain ATCC BAA-499 / JS614), this protein is Barbiturase 2.